Consider the following 267-residue polypeptide: Hydroxynaphthalene reductase-like protein Arp2 (267 aa).

I25, N45, D71, and N98 together coordinate NADP(+). Residues S147 and S148 each act as proton donor in the active site. NADP(+) is bound by residues Y162, K166, V195, and T197. Residue Y162 is the Proton acceptor of the active site. The Lowers pKa of active site Tyr role is filled by K166.

Belongs to the short-chain dehydrogenases/reductases (SDR) family.

Functionally, hydroxynaphthalene reductase-like protein; part of the Pks2 gene cluster that mediates the formation of infectious structures (appressoria), enabling these fungi to kill insects faster. The product of the Pks2 gene cluster is different from the one of Pks1 and has still not been identified. In Metarhizium majus (strain ARSEF 297), this protein is Hydroxynaphthalene reductase-like protein Arp2.